A 511-amino-acid polypeptide reads, in one-letter code: Bifunctional purine biosynthesis protein PurH (511 aa).

The region spanning 1 to 145 (MKKRALVSVS…KNHQFVSVIV (145 aa)) is the MGS-like domain.

It belongs to the PurH family.

The catalysed reaction is (6R)-10-formyltetrahydrofolate + 5-amino-1-(5-phospho-beta-D-ribosyl)imidazole-4-carboxamide = 5-formamido-1-(5-phospho-D-ribosyl)imidazole-4-carboxamide + (6S)-5,6,7,8-tetrahydrofolate. It catalyses the reaction IMP + H2O = 5-formamido-1-(5-phospho-D-ribosyl)imidazole-4-carboxamide. The protein operates within purine metabolism; IMP biosynthesis via de novo pathway; 5-formamido-1-(5-phospho-D-ribosyl)imidazole-4-carboxamide from 5-amino-1-(5-phospho-D-ribosyl)imidazole-4-carboxamide (10-formyl THF route): step 1/1. Its pathway is purine metabolism; IMP biosynthesis via de novo pathway; IMP from 5-formamido-1-(5-phospho-D-ribosyl)imidazole-4-carboxamide: step 1/1. This is Bifunctional purine biosynthesis protein PurH from Bacillus cereus (strain G9842).